We begin with the raw amino-acid sequence, 272 residues long: 1,4-dihydroxy-6-naphtoate synthase (272 aa).

Substrate-binding positions include 55–57 (KLS) and 107–108 (TA). H145 (proton acceptor) is an active-site residue.

This sequence belongs to the MqnA/MqnD family. MqnD subfamily.

It catalyses the reaction cyclic dehypoxanthinylfutalosinate = 1,4-dihydroxy-6-naphthoate + dihydroxyacetone. The protein operates within quinol/quinone metabolism; menaquinone biosynthesis. In terms of biological role, catalyzes the conversion of cyclic dehypoxanthine futalosine (cyclic DHFL) into 1,4-dihydroxy-6-naphthoate, a step in the biosynthesis of menaquinone (MK, vitamin K2). In Thermus thermophilus (strain ATCC 27634 / DSM 579 / HB8), this protein is 1,4-dihydroxy-6-naphtoate synthase.